A 1427-amino-acid polypeptide reads, in one-letter code: DNA-directed RNA polymerase subunit beta' (1427 aa).

Zn(2+)-binding residues include cysteine 66, cysteine 68, cysteine 81, and cysteine 84. Residues aspartate 472, aspartate 474, and aspartate 476 each contribute to the Mg(2+) site. Residues cysteine 815, cysteine 889, cysteine 896, and cysteine 899 each contribute to the Zn(2+) site.

The protein belongs to the RNA polymerase beta' chain family. As to quaternary structure, the RNAP catalytic core consists of 2 alpha, 1 beta, 1 beta' and 1 omega subunit. When a sigma factor is associated with the core the holoenzyme is formed, which can initiate transcription. Mg(2+) is required as a cofactor. It depends on Zn(2+) as a cofactor.

It catalyses the reaction RNA(n) + a ribonucleoside 5'-triphosphate = RNA(n+1) + diphosphate. DNA-dependent RNA polymerase catalyzes the transcription of DNA into RNA using the four ribonucleoside triphosphates as substrates. This is DNA-directed RNA polymerase subunit beta' from Bacteroides fragilis (strain ATCC 25285 / DSM 2151 / CCUG 4856 / JCM 11019 / LMG 10263 / NCTC 9343 / Onslow / VPI 2553 / EN-2).